The chain runs to 357 residues: Mannonate dehydratase (357 aa).

The protein belongs to the mannonate dehydratase family. It depends on Fe(2+) as a cofactor. Mn(2+) is required as a cofactor.

The enzyme catalyses D-mannonate = 2-dehydro-3-deoxy-D-gluconate + H2O. It functions in the pathway carbohydrate metabolism; pentose and glucuronate interconversion. In terms of biological role, catalyzes the dehydration of D-mannonate. The chain is Mannonate dehydratase from Sorangium cellulosum (strain So ce56) (Polyangium cellulosum (strain So ce56)).